Reading from the N-terminus, the 134-residue chain is Salivary protein 15 Iric-1 (134 aa).

The N-terminal stretch at 1–21 is a signal peptide; the sequence is MESFVAMKVVCITVLFVIVAV. A glycan (N-linked (GlcNAc...) asparagine) is linked at N22. Residues 48–67 form a required for Borrelia OspC-binding region; the sequence is PSYIRNPQKLALELLEICKN. 2 N-linked (GlcNAc...) asparagine glycosylation sites follow: N91 and N103. Residues 115 to 134 form a CD4-binding region; it reads GPNGETCAEKSKCVGHIPGC.

The protein belongs to the salp15 family. As to quaternary structure, monomer. Interacts with host CD4. Interacts with host DC-SIGN (CD209). (Microbial infection) Interacts with Borrelia outer surface protein C (OspC). As to expression, expressed in salivary glands. Detected in fed adult female.

It localises to the secreted. Functionally, salivary tick protein that downregulates host immune system by binding to both dendritic cells, and CD4(+) T cells. Specifically binds to the CD4 coreceptor on T cells. This interaction prevents the activation of the Src kinase, Lck, and its downstream substrate Zap-70, and results in deficient activation of PLCgamma1, the repression of calcium fluxes triggered by T-cell antigen receptor (TCR) ligation, and a subsequent reduction in interleukin-2 production. This salivary protein also binds to DC-SIGN (CD209) on dendritic cells (DC) and activates the Raf-1 kinase/MEK signaling pathway that results in down-regulating expression of pro-inflammatory cytokines. Furthermore, it inhibits T cell proliferation induced by DCs. In addition, it inhibits in vitro keratinocyte inflammation induced by Borrelia burgdorferi or by the major outer surface protein (OspC) of Borrelia. In addition, it downregulates chemokines and monocyte chemoattractant protein 1, as well as several antimicrobial peptides such as defensins, cathelicidin, psoriasin, and RNase 7. Apart from its immunomodulatory activities, it is also associated with protection of Borrelia spirochetes from antibody-mediated killing through its binding to OspC. In vivo, tests on different immune disease animal models show promising therapeutic results, e.g., in inhibiting HIV infection, experimental autoimmune encephalomyelitis, transplantation rejection, and asthma. Its function is as follows. (Microbial infection) Protects Borrelia garinii (strain VSBP) from host complement-mediated killing by binding to the surface of spirochetes and preventing deposition of host C5b-9 membrane attack complexes. Protects Borrelia garinii (strain A87S) from host complement-mediated killing. In terms of biological role, (Microbial infection) Partially protects Borrelia burgdorferi (strains VS215 and B31) from host complement-mediated killing. This is Salivary protein 15 Iric-1 from Ixodes ricinus (Common tick).